The following is a 407-amino-acid chain: MKYDHLLVRYGELTLKGSNRKKFVNQLRNNVNKSLKGLDGFVVKGKRDRMYIELEDHADINEITYRLSKIFGIKSISPVLKVEKTIEAMSAAAIKFAQQFEENSTFKIDVKRADKNFPMDTYELQRELGGTVLKQIENVSVNVKRPDHEIRVEVRLDAIYMYEEVVPGSGGLPVGTGGKTLLMLSGGIDSPVAGMEVMRRGVTIEAIHFHSPPFTSDQAKEKVIELTRILAERVGPIKLHIVPFTELQKQVNKVVHPRYTMTSTRRMMMRVADKLVHQIGALAIVNGENLGQVASQTLHSMYAINNVTSTPVLRPLLTYDKEEIIIKSKEIGTFETSIQPFEDCCTIFTPKNPVTEPNFEKVVQYESVFDFEEMINRAVENIETLEITSDYKTIKEQQTNQLINDFL.

The region spanning 61–165 (NEITYRLSKI…LDAIYMYEEV (105 aa)) is the THUMP domain. ATP is bound by residues 183-184 (ML), 208-209 (HF), Arg265, Gly287, and Gln296.

This sequence belongs to the ThiI family.

Its subcellular location is the cytoplasm. It carries out the reaction [ThiI sulfur-carrier protein]-S-sulfanyl-L-cysteine + a uridine in tRNA + 2 reduced [2Fe-2S]-[ferredoxin] + ATP + H(+) = [ThiI sulfur-carrier protein]-L-cysteine + a 4-thiouridine in tRNA + 2 oxidized [2Fe-2S]-[ferredoxin] + AMP + diphosphate. The enzyme catalyses [ThiS sulfur-carrier protein]-C-terminal Gly-Gly-AMP + S-sulfanyl-L-cysteinyl-[cysteine desulfurase] + AH2 = [ThiS sulfur-carrier protein]-C-terminal-Gly-aminoethanethioate + L-cysteinyl-[cysteine desulfurase] + A + AMP + 2 H(+). It functions in the pathway cofactor biosynthesis; thiamine diphosphate biosynthesis. In terms of biological role, catalyzes the ATP-dependent transfer of a sulfur to tRNA to produce 4-thiouridine in position 8 of tRNAs, which functions as a near-UV photosensor. Also catalyzes the transfer of sulfur to the sulfur carrier protein ThiS, forming ThiS-thiocarboxylate. This is a step in the synthesis of thiazole, in the thiamine biosynthesis pathway. The sulfur is donated as persulfide by IscS. This is Probable tRNA sulfurtransferase from Staphylococcus aureus (strain Mu3 / ATCC 700698).